A 336-amino-acid chain; its full sequence is tRNA N6-adenosine threonylcarbamoyltransferase (336 aa).

His-114 and His-118 together coordinate Fe cation. Residues 136–140, Asp-169, Gly-182, Asp-186, and Asn-275 each bind substrate; that span reads LVSGG. Residue Asp-301 participates in Fe cation binding.

The protein belongs to the KAE1 / TsaD family. The cofactor is Fe(2+).

The protein resides in the cytoplasm. The catalysed reaction is L-threonylcarbamoyladenylate + adenosine(37) in tRNA = N(6)-L-threonylcarbamoyladenosine(37) in tRNA + AMP + H(+). Functionally, required for the formation of a threonylcarbamoyl group on adenosine at position 37 (t(6)A37) in tRNAs that read codons beginning with adenine. Is involved in the transfer of the threonylcarbamoyl moiety of threonylcarbamoyl-AMP (TC-AMP) to the N6 group of A37, together with TsaE and TsaB. TsaD likely plays a direct catalytic role in this reaction. The protein is tRNA N6-adenosine threonylcarbamoyltransferase of Streptococcus pneumoniae (strain P1031).